A 326-amino-acid chain; its full sequence is HTH-type transcriptional regulator SyrM (326 aa).

The 58-residue stretch at 32-89 folds into the HTH lysR-type domain; that stretch reads IDLNLLVDLEALLQYRHITQAAQHVGRSQPAMSRALSRLRGMLKDDLLVAGSRGLVLT. Residues 49–68 constitute a DNA-binding region (H-T-H motif); that stretch reads ITQAAQHVGRSQPAMSRALS.

The protein belongs to the LysR transcriptional regulatory family.

Acts in trans to stimulate nod gene expression via nodD3 and exo gene expression via SyrA. This Rhizobium meliloti (strain 1021) (Ensifer meliloti) protein is HTH-type transcriptional regulator SyrM (syrM).